A 714-amino-acid chain; its full sequence is T-cell activation Rho GTPase-activating protein (714 aa).

In terms of domain architecture, Rho-GAP spans 88–277 (QPLSIICGEN…FLIDNCFEIF (190 aa)). Disordered regions lie at residues 290-357 (DDSL…ESSV), 370-419 (QDRR…AEDP), 451-508 (QGHI…HSMS), 520-563 (RTSS…QSQT), and 623-650 (KPST…HRLS). A compositionally biased stretch (polar residues) spans 299-311 (SDVSTLQNDSAYD). A Phosphoserine modification is found at serine 398. The span at 459–471 (SRSSPGESLGSSP) shows a compositional bias: low complexity. Composition is skewed to basic and acidic residues over residues 492–501 (KTDKTKPQRE) and 527–545 (EKSK…RKES).

In terms of tissue distribution, highly expressed in testis.

Its function is as follows. May function as a GTPase-activating protein. May play a role in transmission ratio distortion (TRD) in mouse, in which heterozygous males for t-locus transmit their t-carrying chromosome to 95% or more of their offspring. This Mus musculus (Mouse) protein is T-cell activation Rho GTPase-activating protein (Tagap).